We begin with the raw amino-acid sequence, 376 residues long: Growth/differentiation factor 8 (376 aa).

The N-terminal stretch at 1 to 24 (MIQKPQMYVYIYLFVLIAAGPVDL) is a signal peptide. The propeptide occupies 25 to 267 (NEDSEREANV…VTDTPKRSRR (243 aa)). N72 carries an N-linked (GlcNAc...) asparagine glycan. Intrachain disulfides connect C273-C283, C282-C341, C310-C373, and C314-C375.

The protein belongs to the TGF-beta family. As to quaternary structure, homodimer; disulfide-linked. Interacts with WFIKKN2, leading to inhibit its activity. Interacts with FSTL3. Synthesized as large precursor molecule that undergoes proteolytic cleavage to generate an N-terminal propeptide and a disulfide linked C-terminal dimer, which is the biologically active molecule. The circulating form consists of a latent complex of the C-terminal dimer and other proteins, including its propeptide, which maintain the C-terminal dimer in a latent, inactive state. Ligand activation requires additional cleavage of the prodomain by a tolloid-like metalloproteinase.

Its subcellular location is the secreted. Functionally, acts specifically as a negative regulator of skeletal muscle growth. In Rattus norvegicus (Rat), this protein is Growth/differentiation factor 8 (Mstn).